Here is a 557-residue protein sequence, read N- to C-terminus: Mercuric reductase (557 aa).

The 65-residue stretch at 1 to 65 (MILLSIEGMT…AIEALGYIAK (65 aa)) folds into the HMA domain. Residues C11 and C14 each contribute to the a metal cation site. FAD contacts are provided by A106 and A126. A disulfide bridge connects residues C133 and C138. K142, A207, D399, and V407 together coordinate FAD. Hg(2+) contacts are provided by C554 and C555.

It belongs to the class-I pyridine nucleotide-disulfide oxidoreductase family. As to quaternary structure, homodimer. FAD is required as a cofactor.

The enzyme catalyses Hg + NADP(+) + H(+) = Hg(2+) + NADPH. Functionally, resistance to Hg(2+) in bacteria appears to be governed by a specialized system which includes mercuric reductase. MerA protein is responsible for volatilizing mercury as Hg(0). In Shewanella putrefaciens (Pseudomonas putrefaciens), this protein is Mercuric reductase (merA).